The primary structure comprises 266 residues: Uxu operon regulator (266 aa).

Residues 23 to 91 (NRTYTRIGQL…KGSGVYVVRT (69 aa)) enclose the HTH gntR-type domain. The segment at residues 51 to 70 (EREISEKFGVSRTIVREAMV) is a DNA-binding region (H-T-H motif).

Its function is as follows. Repressor for the uxuRBA operon. The protein is Uxu operon regulator (uxuR) of Haemophilus influenzae (strain ATCC 51907 / DSM 11121 / KW20 / Rd).